The chain runs to 348 residues: 5-deoxyribose 1-phosphate isomerase (348 aa).

Residues 49–51 (RGA), Arg-92, and Gln-199 contribute to the substrate site. Asp-240 (proton donor) is an active-site residue. 250–251 (NK) is a substrate binding site.

Belongs to the EIF-2B alpha/beta/delta subunits family. DrdI subfamily. Homodimer.

The catalysed reaction is 5-deoxy-alpha-D-ribose 1-phosphate = 5-deoxy-D-ribulose 1-phosphate. It catalyses the reaction 5-(methylsulfanyl)-alpha-D-ribose 1-phosphate = 5-(methylsulfanyl)-D-ribulose 1-phosphate. Its pathway is carbohydrate degradation. Its function is as follows. Catalyzes the isomerization of 5-deoxy-alpha-D-ribose 1-phosphate to 5-deoxy-D-ribulose 1-phosphate, as part of a 5-deoxyribose salvage pathway that recycles this toxic radical SAM enzyme by-product to mainstream metabolites. Also seems to be able to catalyze the conversion of methylthioribose-1-phosphate (MTR-1-P) into methylthioribulose-1-phosphate (MTRu-1-P). However this enzyme may not function in methionine salvage in B.thuringiensis since it exists a paralog (MtnA) present in the methionine salvage pathway cluster. The chain is 5-deoxyribose 1-phosphate isomerase from Bacillus thuringiensis serovar kurstaki (strain ATCC 35866 / NRRL B-4488 / HD73).